Reading from the N-terminus, the 351-residue chain is Auxin efflux carrier component 5 (351 aa).

Transmembrane regions (helical) follow at residues 7 to 27 (VYKV…GYGS), 39 to 59 (CDAI…IEFT), 71 to 91 (FIAA…LWAK), 100 to 120 (WSIT…GVPL), 132 to 152 (LVVQ…LFVL), 210 to 230 (ILGI…PGIL), 234 to 254 (ILIM…IFMA), 271 to 291 (MVLK…VLGL), 295 to 315 (VLRV…FIFA), and 329 to 349 (VIFG…ALEF).

This sequence belongs to the auxin efflux carrier (TC 2.A.69.1) family. Expressed in elongating parts of hypocotyl, cotyledon vasculature and guard cells. Detected in root pericycle and root tip and at later developmental stages in leaves, stems and flowers. Expressed in veins of mature leaves.

It localises to the endoplasmic reticulum membrane. The protein localises to the cell membrane. In terms of biological role, auxin transporter regulating intracellular auxin homeostasis and metabolism. Mediates the auxin transport from the cytosol into the lumen of the endoplasmic reticulum. May also act as an auxin efflux carrier when located to the cell membrane. PIN5 and PIN8 may have an antagonistic/compensatory activity. Involved in unfolded protein response (UPR) activation. Involved in the control of vein patterning. Promotes vein formation. PIN5, PIN6, and PIN8 control vein network geometry, but they are expressed in mutually exclusive domains of leaf vascular cells. This Arabidopsis thaliana (Mouse-ear cress) protein is Auxin efflux carrier component 5.